The following is a 281-amino-acid chain: MIENRPWLTIFSHTMLILGIAVILFPLYVAFVAATLDKQAVYAAPMTLIPGTHLLENIHNIWVNGVGTNSAPFWRMLLNSFVMAFSITLGKITVSMLSAFAIVWFRFPLRNLFFWMIFITLMLPVEVRIFPTVEVIANLKMLDSYAGLTLPLMASAIATFLFRQFFMTLPDELVEAARIDGASPMRFFCDIVFPLSKTNLAALFVITFIYGWNQYLWPLLIITDVDLGTTVAGIKGMIATGEGTTEWNSVMAAMLLTLIPPVVIVLVMQRAFVRGLVDSEK.

6 helical membrane passes run Leu16–Leu36, Phe85–Phe105, Phe113–Val133, Leu142–Phe162, Ala202–Ile222, and Trp247–Val267. One can recognise an ABC transmembrane type-1 domain in the interval Leu77 to Met268.

The protein belongs to the binding-protein-dependent transport system permease family. UgpAE subfamily. The complex is composed of two ATP-binding proteins (UgpC), two transmembrane proteins (UgpA and UgpE) and a solute-binding protein (UgpB).

It is found in the cell inner membrane. Functionally, part of the ABC transporter complex UgpBAEC involved in sn-glycerol-3-phosphate (G3P) import. Probably responsible for the translocation of the substrate across the membrane. The polypeptide is sn-glycerol-3-phosphate transport system permease protein UgpE (ugpE) (Shigella flexneri serotype 5b (strain 8401)).